Here is a 363-residue protein sequence, read N- to C-terminus: Aminomethyltransferase (363 aa).

It belongs to the GcvT family. In terms of assembly, the glycine cleavage system is composed of four proteins: P, T, L and H.

It carries out the reaction N(6)-[(R)-S(8)-aminomethyldihydrolipoyl]-L-lysyl-[protein] + (6S)-5,6,7,8-tetrahydrofolate = N(6)-[(R)-dihydrolipoyl]-L-lysyl-[protein] + (6R)-5,10-methylene-5,6,7,8-tetrahydrofolate + NH4(+). Functionally, the glycine cleavage system catalyzes the degradation of glycine. This Staphylococcus aureus (strain bovine RF122 / ET3-1) protein is Aminomethyltransferase.